A 166-amino-acid polypeptide reads, in one-letter code: Lipoprotein signal peptidase (166 aa).

The next 4 membrane-spanning stretches (helical) occupy residues 9-29 (AGGS…FDQL), 37-57 (VFAY…LVYN), 71-91 (WQRW…CYLL), and 100-120 (FCTA…DRLL). Catalysis depends on residues aspartate 126 and aspartate 144. A helical transmembrane segment spans residues 136-156 (HWPAFNLADSAITIGAALLVF).

Belongs to the peptidase A8 family.

The protein localises to the cell inner membrane. It catalyses the reaction Release of signal peptides from bacterial membrane prolipoproteins. Hydrolyzes -Xaa-Yaa-Zaa-|-(S,diacylglyceryl)Cys-, in which Xaa is hydrophobic (preferably Leu), and Yaa (Ala or Ser) and Zaa (Gly or Ala) have small, neutral side chains.. Its pathway is protein modification; lipoprotein biosynthesis (signal peptide cleavage). This protein specifically catalyzes the removal of signal peptides from prolipoproteins. This chain is Lipoprotein signal peptidase, found in Paraburkholderia phymatum (strain DSM 17167 / CIP 108236 / LMG 21445 / STM815) (Burkholderia phymatum).